The following is a 167-amino-acid chain: Ubiquitin-conjugating enzyme E2 14 (167 aa).

At Ala2 the chain carries N-acetylalanine. The 161-residue stretch at 5-165 folds into the UBC core domain; it reads QASLLLQKQL…VSRCVRRSQE (161 aa). Cys90 serves as the catalytic Glycyl thioester intermediate.

Belongs to the ubiquitin-conjugating enzyme family.

It catalyses the reaction S-ubiquitinyl-[E1 ubiquitin-activating enzyme]-L-cysteine + [E2 ubiquitin-conjugating enzyme]-L-cysteine = [E1 ubiquitin-activating enzyme]-L-cysteine + S-ubiquitinyl-[E2 ubiquitin-conjugating enzyme]-L-cysteine.. Its pathway is protein modification; protein ubiquitination. Its function is as follows. Accepts the ubiquitin from the E1 complex and catalyzes its covalent attachment to other proteins. Involved in the formation of multiubiquitin chains. Signal the protein for selective degradation. This chain is Ubiquitin-conjugating enzyme E2 14 (UBC14), found in Arabidopsis thaliana (Mouse-ear cress).